The following is a 598-amino-acid chain: Leucine aminopeptidase 2, chloroplastic (598 aa).

Residues 1 to 71 constitute a chloroplast transit peptide; it reads MATAASTSAA…GHRARMGHTA (71 aa). Positions 367 and 372 each coordinate Mn(2+). Lys379 is a catalytic residue. Residues Asp392, Asp452, and Glu454 each contribute to the Mn(2+) site. The active site involves Arg456.

This sequence belongs to the peptidase M17 family. As to quaternary structure, homohexamer (dimer of homotrimers). Requires Mn(2+) as cofactor.

The protein localises to the plastid. Its subcellular location is the chloroplast. It catalyses the reaction Release of an N-terminal amino acid, Xaa-|-Yaa-, in which Xaa is preferably Leu, but may be other amino acids including Pro although not Arg or Lys, and Yaa may be Pro. Amino acid amides and methyl esters are also readily hydrolyzed, but rates on arylamides are exceedingly low.. The catalysed reaction is Release of N-terminal proline from a peptide.. Presumably involved in the processing and regular turnover of intracellular proteins. Catalyzes the removal of unsubstituted N-terminal amino acids from various peptides. The polypeptide is Leucine aminopeptidase 2, chloroplastic (Oryza sativa subsp. japonica (Rice)).